The following is a 242-amino-acid chain: MGRGPSIEGRKNASDAKRGKMFTKIIREISVAARAGGGDPSNNPRLRTAMDKGLSSNMSKDVMERAIKKSTGELEGVEYEEVRYEGYAPGGVAVIVDCLTDNRVRTVADVRHAFSKCGGNMGTEGSVAFMFKRLGVLSFAAGIDEDTLTDAAIEAGADDVVVYPEDGAIDVLTAPDAFAQVRDALVAAGLEPAHAEITFRADNDIAVDGETAVQVRKLLDMLEDLDDVQDVYSNVDQAALGA.

The protein belongs to the TACO1 family.

It is found in the cytoplasm. The polypeptide is Probable transcriptional regulatory protein XCV3282 (Xanthomonas euvesicatoria pv. vesicatoria (strain 85-10) (Xanthomonas campestris pv. vesicatoria)).